The primary structure comprises 436 residues: Transcription factor Sox-10 (436 aa).

5 disordered regions span residues 1 to 55 (MSDD…ERFP), 145 to 183 (RLRM…AEGG), 195 to 257 (HLDH…DFGN), 322 to 346 (PQTD…QPST), and 413 to 436 (SPSV…LSRP). Lysine 44 participates in a covalent cross-link: Glycyl lysine isopeptide (Lys-Gly) (interchain with G-Cter in SUMO). The interval 48–88 (DSEDERFPVCIREAVSQVLSGYDWTLVPMPVRVNGGSKSKP) is dimerization (DIM). A DNA-binding region (HMG box) is located at residues 90–158 (VKRPMNAFMV…QHKKDHPDYK (69 aa)). Residues 145 to 159 (RLRMQHKKDHPDYKY) are compositionally biased toward basic and acidic residues. 2 stretches are compositionally biased toward polar residues: residues 205–215 (SDGNSEHSAGQ) and 331–346 (KTES…QPST). Residues 209-295 (SEHSAGQSHG…NGHAGHPSHI (87 aa)) form a transactivation domain (TAM) region. The transactivation domain (TAC) stretch occupies residues 327–436 (KAQVKTESSS…QPVYTTLSRP (110 aa)). Lysine 331 is covalently cross-linked (Glycyl lysine isopeptide (Lys-Gly) (interchain with G-Cter in SUMO)).

As to quaternary structure, interacts with the sumoylation factors ube2i/ubc9 and sumo1. Post-translationally, sumoylated.

It localises to the cytoplasm. Its subcellular location is the nucleus. Its function is as follows. Acts early in neural crest formation, functioning redundantly with the other group E Sox factors sox8 and sox9 to induce neural crest progenitors. Acts downstream of wnt-signaling at the neural plate border. Involved in the specification of neural crest progenitors fated to form the pigment cell lineage. The polypeptide is Transcription factor Sox-10 (Xenopus tropicalis (Western clawed frog)).